A 209-amino-acid chain; its full sequence is Na(+)-translocating NADH-quinone reductase subunit D (209 aa).

A run of 5 helical transmembrane segments spans residues 42-62 (LVMT…ISLI), 66-86 (IPNS…VIVV), 103-123 (VFVG…AYAM), 131-151 (FMDG…VGFV), and 178-198 (NGLF…IWGL).

This sequence belongs to the NqrDE/RnfAE family. In terms of assembly, composed of six subunits; NqrA, NqrB, NqrC, NqrD, NqrE and NqrF.

It localises to the cell inner membrane. It catalyses the reaction a ubiquinone + n Na(+)(in) + NADH + H(+) = a ubiquinol + n Na(+)(out) + NAD(+). Functionally, NQR complex catalyzes the reduction of ubiquinone-1 to ubiquinol by two successive reactions, coupled with the transport of Na(+) ions from the cytoplasm to the periplasm. NqrA to NqrE are probably involved in the second step, the conversion of ubisemiquinone to ubiquinol. The polypeptide is Na(+)-translocating NADH-quinone reductase subunit D (Yersinia pseudotuberculosis serotype O:1b (strain IP 31758)).